Reading from the N-terminus, the 29-residue chain is Omega-conotoxins GVIIA/GVIIB (29 aa).

3 disulfide bridges follow: Cys-1–Cys-16, Cys-8–Cys-19, and Cys-15–Cys-26. Pro-4 and Pro-7 each carry 4-hydroxyproline.

Expressed by the venom duct.

The protein localises to the secreted. In terms of biological role, omega-conotoxins act at presynaptic membranes, they bind and block voltage-gated calcium channels (Cav). The polypeptide is Omega-conotoxins GVIIA/GVIIB (Conus geographus (Geography cone)).